Here is a 53-residue protein sequence, read N- to C-terminus: UPF0337 protein LJ_0034.1 (53 aa).

Residues 27 to 53 are disordered; it reads AREVEGKAQQAKGKVKSKATEVKEDLE. A compositionally biased stretch (basic and acidic residues) spans 44–53; it reads KATEVKEDLE.

It belongs to the UPF0337 (CsbD) family.

The sequence is that of UPF0337 protein LJ_0034.1 from Lactobacillus johnsonii (strain CNCM I-12250 / La1 / NCC 533).